Here is a 1489-residue protein sequence, read N- to C-terminus: Chromosome partition protein MukB (1489 aa).

Position 34 to 41 (34 to 41 (GGNGAGKS)) interacts with ATP. Coiled coils occupy residues 326–418 (LEAD…QYNQ), 444–472 (LETF…QTAH), 509–602 (RHLA…QRAP), 780–805 (RAAR…ATLS), 835–919 (EAEI…GNQL), 977–1116 (EMLS…AKAG), and 1209–1266 (VEAI…QNVS). The interval 666–783 (PGGSEDSRLN…TVPIFGRAAR (118 aa)) is flexible hinge.

It belongs to the SMC family. MukB subfamily. As to quaternary structure, homodimerization via its hinge domain. Binds to DNA via its C-terminal region. Interacts, and probably forms a ternary complex, with MukE and MukF via its C-terminal region. The complex formation is stimulated by calcium or magnesium. Interacts with tubulin-related protein FtsZ.

Its subcellular location is the cytoplasm. The protein localises to the nucleoid. Functionally, plays a central role in chromosome condensation, segregation and cell cycle progression. Functions as a homodimer, which is essential for chromosome partition. Involved in negative DNA supercoiling in vivo, and by this means organize and compact chromosomes. May achieve or facilitate chromosome segregation by condensation DNA from both sides of a centrally located replisome during cell division. This chain is Chromosome partition protein MukB, found in Citrobacter koseri (strain ATCC BAA-895 / CDC 4225-83 / SGSC4696).